The following is an 89-amino-acid chain: Large ribosomal subunit protein bL27 (89 aa).

It belongs to the bacterial ribosomal protein bL27 family.

This chain is Large ribosomal subunit protein bL27, found in Ruegeria sp. (strain TM1040) (Silicibacter sp.).